Reading from the N-terminus, the 416-residue chain is Enolase (416 aa).

(2R)-2-phosphoglycerate is bound at residue glutamine 162. Glutamate 204 serves as the catalytic Proton donor. Mg(2+) is bound by residues aspartate 241, glutamate 282, and aspartate 309. 4 residues coordinate (2R)-2-phosphoglycerate: lysine 334, arginine 363, serine 364, and lysine 385. The Proton acceptor role is filled by lysine 334.

Belongs to the enolase family. Mg(2+) serves as cofactor.

It is found in the cytoplasm. The protein resides in the secreted. The protein localises to the cell surface. The catalysed reaction is (2R)-2-phosphoglycerate = phosphoenolpyruvate + H2O. It participates in carbohydrate degradation; glycolysis; pyruvate from D-glyceraldehyde 3-phosphate: step 4/5. Catalyzes the reversible conversion of 2-phosphoglycerate (2-PG) into phosphoenolpyruvate (PEP). It is essential for the degradation of carbohydrates via glycolysis. This chain is Enolase, found in Campylobacter concisus (strain 13826).